The following is a 431-amino-acid chain: Gamma-glutamyl phosphate reductase (431 aa).

This sequence belongs to the gamma-glutamyl phosphate reductase family.

Its subcellular location is the cytoplasm. The catalysed reaction is L-glutamate 5-semialdehyde + phosphate + NADP(+) = L-glutamyl 5-phosphate + NADPH + H(+). The protein operates within amino-acid biosynthesis; L-proline biosynthesis; L-glutamate 5-semialdehyde from L-glutamate: step 2/2. Its function is as follows. Catalyzes the NADPH-dependent reduction of L-glutamate 5-phosphate into L-glutamate 5-semialdehyde and phosphate. The product spontaneously undergoes cyclization to form 1-pyrroline-5-carboxylate. This chain is Gamma-glutamyl phosphate reductase, found in Trichodesmium erythraeum (strain IMS101).